The chain runs to 301 residues: Recombination-associated protein RdgC (301 aa).

This sequence belongs to the RdgC family.

It localises to the cytoplasm. The protein localises to the nucleoid. In terms of biological role, may be involved in recombination. This is Recombination-associated protein RdgC from Xanthomonas oryzae pv. oryzae (strain KACC10331 / KXO85).